We begin with the raw amino-acid sequence, 541 residues long: uncharacterized protein (541 aa).

An N-terminal signal peptide occupies residues 1-17 (MSFSATILFSPPSGSEA). Disordered regions lie at residues 28 to 47 (TSQG…TPIT) and 103 to 138 (GKVC…SNSL). The segment covering 103–116 (GKVCTADEDRESRA) has biased composition (basic and acidic residues). Phosphothreonine is present on T118. Glycyl lysine isopeptide (Lys-Gly) (interchain with G-Cter in SUMO2) cross-links involve residues K128 and K223. S226 bears the Phosphoserine mark. A compositionally biased stretch (polar residues) spans 232–243 (AIQRASSETGPE). A disordered region spans residues 232–254 (AIQRASSETGPESGTKLPATRPE). A phosphoserine mark is found at S286 and S429. A disordered region spans residues 494–526 (YNPNFQEDEGGGNEKGPVSPSYDQPHKTSCPDL).

It is found in the secreted. This is an uncharacterized protein from Mus musculus (Mouse).